We begin with the raw amino-acid sequence, 282 residues long: MAHMRDLKRRIRSVQSTQHITRAMKMVAAAKLRKAQAQVTAARPYAAKLEEVVGRLMAAVDPETQPLAATREVKKAGYVLITADRGLAGGYNANLIRLTEERLREEGRPAALVAVGRKGRDFFRRRPVEIVKSFTDIGDNPELIQARELARQLVTMYLEGTLDEVNLIYTRFYSAIRQVPMVERLLPIATPREKKDTGDYIYEPSPEAVLRVLLPRYCEIKVYRALLEAKASEHGARMTAMDNATKNAAEMIDKFTLSFNRARQAAITNEIVEIVAGADALK.

This sequence belongs to the ATPase gamma chain family. F-type ATPases have 2 components, CF(1) - the catalytic core - and CF(0) - the membrane proton channel. CF(1) has five subunits: alpha(3), beta(3), gamma(1), delta(1), epsilon(1). CF(0) has three main subunits: a, b and c. In this bacterium the a and b subunits are transcribed but do not seem to be translated, thus the ATP synthase consists of the alpha, beta, gamma, delta, epsilon and c subunits.

The protein resides in the cell membrane. Produces ATP from ADP in the presence of a proton gradient across the membrane. The gamma chain is believed to be important in regulating ATPase activity and the flow of protons through the CF(0) complex. The polypeptide is ATP synthase gamma chain (Moorella thermoacetica (strain ATCC 39073 / JCM 9320)).